Here is a 706-residue protein sequence, read N- to C-terminus: MAHVRNKKSDDKKAMVVAKEDTNKSESEGVTKLQTYLKTIPIAKKKFAKLPKRKKSPTSAELLLIDPRYSASKEGPLGLGPIVLPFVQRFNNIDGFMTLYVAAVLIHGALFAVVDMTLNIYQVQFSLTRTEWYLMDFSDYIASFVVAIIIAHFGSKGNRTRWIAASCILMGLESMLFAFPFFTYEIIIPGRQSIELCMEENEKRNIICGNSVPNRSKCIYFHIAGQCIHGIAGMPIYILGITFIFDHIPTSSCGFYLAIGHSAYLIGYLLGMVGGLQNFQPPPKEKTVEIEPAKVYQLLQSGWWKTFLIIAAISFCVSFMMVCFPTSLPGAHKLRLAKRKEPPTIDRRLKDMKIQPHLKGFLHNIWHILKNPLMLTQAICKVSEYLTFNTSLYFLPHHLQTQFLITPGIASLLTGAFVLPGGIIGHFLGGLIVDRLEMTNKNKLKFTLVTTVVSVGLFLLIFFVECQTTTFAGINEDYDGYGQLGNLTADCNEYCDCTTSLYTSICGRDEKEYFSPCFAGCKATKVSQTEKTYYNCSCIKEGLAASDDEGQFIDAIAGTCDSDCLKLPLFFAFYFSATVFSNMCSIPVISIILQSVPANFTSLSLGVTYAIVKFVASVPAPLLFRLSSAIACIYWDNNRCGGKERCWIYNKNILVYEFMGIWMSSQLIIVLLNIYAIQIHDVVVHGEITESKTTVKDVKEQKERKA.

Positions 1-24 are disordered; sequence MAHVRNKKSDDKKAMVVAKEDTNK. The Cytoplasmic segment spans residues 1 to 94; the sequence is MAHVRNKKSD…PFVQRFNNID (94 aa). Residues 7 to 24 show a composition bias toward basic and acidic residues; it reads KKSDDKKAMVVAKEDTNK. A helical membrane pass occupies residues 95-118; the sequence is GFMTLYVAAVLIHGALFAVVDMTL. Over 119–130 the chain is Extracellular; it reads NIYQVQFSLTRT. The chain crosses the membrane as a helical span at residues 131–151; the sequence is EWYLMDFSDYIASFVVAIIIA. Topologically, residues 152 to 159 are cytoplasmic; it reads HFGSKGNR. The helical transmembrane segment at 160–180 threads the bilayer; sequence TRWIAASCILMGLESMLFAFP. At 181–218 the chain is on the extracellular side; sequence FFTYEIIIPGRQSIELCMEENEKRNIICGNSVPNRSKC. N-linked (GlcNAc...) asparagine glycosylation is present at asparagine 214. Residues 219-241 form a helical membrane-spanning segment; that stretch reads IYFHIAGQCIHGIAGMPIYILGI. The Cytoplasmic portion of the chain corresponds to 242-253; that stretch reads TFIFDHIPTSSC. The chain crosses the membrane as a helical span at residues 254–277; that stretch reads GFYLAIGHSAYLIGYLLGMVGGLQ. Over 278–301 the chain is Extracellular; that stretch reads NFQPPPKEKTVEIEPAKVYQLLQS. The chain crosses the membrane as a helical span at residues 302 to 324; the sequence is GWWKTFLIIAAISFCVSFMMVCF. Over 325-374 the chain is Cytoplasmic; sequence PTSLPGAHKLRLAKRKEPPTIDRRLKDMKIQPHLKGFLHNIWHILKNPLM. A helical membrane pass occupies residues 375–396; sequence LTQAICKVSEYLTFNTSLYFLP. Over 397-410 the chain is Extracellular; sequence HHLQTQFLITPGIA. A helical transmembrane segment spans residues 411–432; sequence SLLTGAFVLPGGIIGHFLGGLI. Residues 433 to 445 are Cytoplasmic-facing; it reads VDRLEMTNKNKLK. A helical transmembrane segment spans residues 446–466; sequence FTLVTTVVSVGLFLLIFFVEC. At 467–565 the chain is on the extracellular side; it reads QTTTFAGINE…IAGTCDSDCL (99 aa). Positions 485 to 540 constitute a Kazal-like domain; that stretch reads GNLTADCNEYCDCTTSLYTSICGRDEKEYFSPCFAGCKATKVSQTEKTYYNCSCIK. An N-linked (GlcNAc...) asparagine glycan is attached at asparagine 486. 3 cysteine pairs are disulfide-bonded: cysteine 491–cysteine 521, cysteine 497–cysteine 517, and cysteine 506–cysteine 538. Asparagine 535 carries an N-linked (GlcNAc...) asparagine glycan. Residues 566–589 form a helical membrane-spanning segment; that stretch reads KLPLFFAFYFSATVFSNMCSIPVI. Topologically, residues 590-604 are cytoplasmic; that stretch reads SIILQSVPANFTSLS. The chain crosses the membrane as a helical span at residues 605–624; it reads LGVTYAIVKFVASVPAPLLF. At 625-652 the chain is on the extracellular side; sequence RLSSAIACIYWDNNRCGGKERCWIYNKN. The chain crosses the membrane as a helical span at residues 653-675; sequence ILVYEFMGIWMSSQLIIVLLNIY. Residues 676–706 are Cytoplasmic-facing; that stretch reads AIQIHDVVVHGEITESKTTVKDVKEQKERKA.

This sequence belongs to the organo anion transporter (TC 2.A.60) family. As to quaternary structure, component of the CatSper complex or CatSpermasome composed of the core pore-forming members CATSPER1, CATSPER2, CATSPER3 and CATSPER4 as well as auxiliary members CATSPERB, CATSPERG2, CATSPERD, CATSPERE, CATSPERZ, C2CD6/CATSPERT, SLCO6C1, TMEM249, TMEM262 and EFCAB9. HSPA1 may be an additional auxiliary complex member. The core complex members CATSPER1, CATSPER2, CATSPER3 and CATSPER4 form a heterotetrameric channel. The auxiliary CATSPERB, CATSPERG2, CATSPERD and CATSPERE subunits form a pavilion-like structure over the pore which stabilizes the complex through interactions with CATSPER4, CATSPER3, CATSPER1 and CATSPER2 respectively. SLCO6C1 interacts with CATSPERE and TMEM262/CATSPERH interacts with CATSPERB, further stabilizing the complex. C2CD6/CATSPERT interacts at least with CATSPERD and is required for targeting the CatSper complex in the flagellar membrane.

It localises to the cell projection. Its subcellular location is the cilium. The protein localises to the flagellum membrane. In terms of biological role, auxiliary component of the CatSper complex, a complex involved in sperm cell hyperactivation. The chain is Solute carrier organic anion transporter family member 6C1 from Mus musculus (Mouse).